Here is a 201-residue protein sequence, read N- to C-terminus: 3-isopropylmalate dehydratase small subunit (201 aa).

Belongs to the LeuD family. LeuD type 1 subfamily. Heterodimer of LeuC and LeuD.

It catalyses the reaction (2R,3S)-3-isopropylmalate = (2S)-2-isopropylmalate. It functions in the pathway amino-acid biosynthesis; L-leucine biosynthesis; L-leucine from 3-methyl-2-oxobutanoate: step 2/4. Its function is as follows. Catalyzes the isomerization between 2-isopropylmalate and 3-isopropylmalate, via the formation of 2-isopropylmaleate. In Ruegeria pomeroyi (strain ATCC 700808 / DSM 15171 / DSS-3) (Silicibacter pomeroyi), this protein is 3-isopropylmalate dehydratase small subunit.